The chain runs to 676 residues: Ion-translocating oxidoreductase complex subunit C (676 aa).

4Fe-4S ferredoxin-type domains lie at 369-397 (GEPQEEQNCIRCSACADACPADLLPQQLY) and 407-436 (KATTHNIADCIECGACAWVCPSNIPLVQYF). 8 residues coordinate [4Fe-4S] cluster: C377, C380, C383, C387, C416, C419, C422, and C426. The disordered stretch occupies residues 600–652 (ARKLEQQQANAEPEQQVDPRKAAVEAAIARAKARKLEQQQANAEPEEQVDPRK). A compositionally biased stretch (low complexity) spans 605 to 615 (QQQANAEPEQQ).

This sequence belongs to the 4Fe4S bacterial-type ferredoxin family. RnfC subfamily. The complex is composed of six subunits: RsxA, RsxB, RsxC, RsxD, RsxE and RsxG. Requires [4Fe-4S] cluster as cofactor.

Its subcellular location is the cell inner membrane. Its function is as follows. Part of a membrane-bound complex that couples electron transfer with translocation of ions across the membrane. Required to maintain the reduced state of SoxR. This chain is Ion-translocating oxidoreductase complex subunit C, found in Escherichia coli (strain SMS-3-5 / SECEC).